The primary structure comprises 825 residues: Breast cancer anti-estrogen resistance protein 3 homolog (825 aa).

N-acetylalanine is present on Ala2. The disordered stretch occupies residues 31–93 (KSPLTEHRPD…PVTQDSIQES (63 aa)). A phosphoserine mark is found at Ser32, Ser78, Ser83, Ser182, and Ser290. A compositionally biased stretch (polar residues) spans 75–93 (HSKSPQQNSPVTQDSIQES). Positions 154–253 (WYHGRIPRQV…QSGAIIFQPI (100 aa)) constitute an SH2 domain. The residue at position 334 (Lys334) is an N6-methyllysine. Ser358, Ser363, and Ser375 each carry phosphoserine. Arg442 is subject to Omega-N-methylarginine. Ser471 carries the phosphoserine modification. In terms of domain architecture, Ras-GEF spans 548-818 (DPKVIAQHIL…TALSRKLEPP (271 aa)). Residues 744-748 (LATAR) form a mediates the interaction with BCAR1/p130CAS region.

As to quaternary structure, part of a complex comprised of PTPRA, BCAR1, BCAR3 (via SH2 domain) and SRC; the formation of the complex is dependent on integrin mediated-tyrosine phosphorylation of PTPRA. Within the complex, interacts (via SH2 domain) with PTPRA (when phosphorylated on 'Tyr-798'). Interacts (via Ras-GEF domain) with BCAR1. Interacts (via Ras-GEF domain) with NEDD9. Interacts with PTK2/FAK1. Interacts with PTPN1. Interacts (via SH2 domain) with EGFR (when tyrosine-phosphorylated). In terms of processing, phosphorylated on tyrosine residues.

Its subcellular location is the cytoplasm. The protein resides in the cell junction. It is found in the focal adhesion. Acts as an adapter protein downstream of several growth factor receptors to promote cell proliferation, migration, and redistribution of actin fibers. Specifically involved in INS/insulin signaling pathway by mediating MAPK1/ERK2-MAPK3/ERK1 activation and DNA synthesis. Promotes insulin-mediated membrane ruffling. In response to vasoconstrictor peptide EDN1, involved in the activation of RAP1 downstream of PTK2B via interaction with phosphorylated BCAR1. Inhibits cell migration and invasion via regulation of TGFB-mediated matrix digestion, actin filament rearrangement, and inhibition of invadopodia activity. May inhibit TGFB-SMAD signaling, via facilitating BCAR1 and SMAD2 and/or SMAD3 interaction. Regulates EGF-induced DNA synthesis. Required for the maintenance of ocular lens morphology and structural integrity, potentially via regulation of focal adhesion complex signaling. Acts upstream of PTPRA to regulate the localization of BCAR1 and PTPRA to focal adhesions, via regulation of SRC-mediated phosphorylation of PTPRA. Positively regulates integrin-induced tyrosine phosphorylation of BCAR1. Acts as a guanine nucleotide exchange factor (GEF) for small GTPases RALA, RAP1A and RRAS. However, in a contrasting study, lacks GEF activity towards RAP1. This chain is Breast cancer anti-estrogen resistance protein 3 homolog (BCAR3), found in Macaca fascicularis (Crab-eating macaque).